The primary structure comprises 377 residues: Peptidyl-prolyl cis-trans isomerase D (377 aa).

The 168-residue stretch at 11–178 (YFDIQIGSQK…TDVTIVDCGE (168 aa)) folds into the PPIase cyclophilin-type domain. TPR repeat units lie at residues 220 to 253 (ASEL…LNEF), 273 to 306 (FTLH…ADAA), and 314 to 347 (AKAY…APGD).

The protein belongs to the cyclophilin-type PPIase family. PPIase D subfamily.

It localises to the cytoplasm. It carries out the reaction [protein]-peptidylproline (omega=180) = [protein]-peptidylproline (omega=0). PPIases accelerate the folding of proteins. It catalyzes the cis-trans isomerization of proline imidic peptide bonds in oligopeptides. The sequence is that of Peptidyl-prolyl cis-trans isomerase D (cpr6) from Aspergillus fumigatus (strain ATCC MYA-4609 / CBS 101355 / FGSC A1100 / Af293) (Neosartorya fumigata).